The primary structure comprises 332 residues: MAVIYYDKDCDLSLIEKKIIGIVGYGAQGHAHAQNLRDSGLKVIVACVEGGRGWKKATADGFEVMCVAEMAKKADIIMMLAPDTSQAKIYKDSVEQGLTPGKMLMFAHGFNIHYGQIVPPSFVDVTMIAPKCPGYMLRQVFTEGAGAPSLIAVEQDASGKAKEIALAYAKGIGSNRAGVLETTFAEETETDLFGEQAVLCGGTTSLVKAGFETLVEAGYQPEVAYFECLHELKLIVDLMYQGGIAYMRDSISDTAKYGDFTRGPRVINEETYETMGEILGEIQDGSFAKEWILENQAGRPVYNSLRRMESEHLIEEVGAELRSMMSWLKKKK.

The KARI N-terminal Rossmann domain occupies Met1–Thr182. Residues Tyr25–Gln28 and Asp83–Gln86 each bind NADP(+). The active site involves His108. An NADP(+)-binding site is contributed by Gly134. The 146-residue stretch at Thr183–Leu328 folds into the KARI C-terminal knotted domain. Residues Asp191, Glu195, Glu227, and Glu231 each contribute to the Mg(2+) site. Ser252 is a substrate binding site.

Belongs to the ketol-acid reductoisomerase family. It depends on Mg(2+) as a cofactor.

The enzyme catalyses (2R)-2,3-dihydroxy-3-methylbutanoate + NADP(+) = (2S)-2-acetolactate + NADPH + H(+). The catalysed reaction is (2R,3R)-2,3-dihydroxy-3-methylpentanoate + NADP(+) = (S)-2-ethyl-2-hydroxy-3-oxobutanoate + NADPH + H(+). It functions in the pathway amino-acid biosynthesis; L-isoleucine biosynthesis; L-isoleucine from 2-oxobutanoate: step 2/4. Its pathway is amino-acid biosynthesis; L-valine biosynthesis; L-valine from pyruvate: step 2/4. Its function is as follows. Involved in the biosynthesis of branched-chain amino acids (BCAA). Catalyzes an alkyl-migration followed by a ketol-acid reduction of (S)-2-acetolactate (S2AL) to yield (R)-2,3-dihydroxy-isovalerate. In the isomerase reaction, S2AL is rearranged via a Mg-dependent methyl migration to produce 3-hydroxy-3-methyl-2-ketobutyrate (HMKB). In the reductase reaction, this 2-ketoacid undergoes a metal-dependent reduction by NADPH to yield (R)-2,3-dihydroxy-isovalerate. This is Ketol-acid reductoisomerase (NADP(+)) from Dehalococcoides mccartyi (strain ATCC BAA-2266 / KCTC 15142 / 195) (Dehalococcoides ethenogenes (strain 195)).